We begin with the raw amino-acid sequence, 430 residues long: Mitochondrial distribution and morphology protein 12 (430 aa).

Residues 1–430 enclose the SMP-LTD domain; the sequence is MSIDIDWERA…VYPSFWTFLI (430 aa). Disordered regions lie at residues 61–117, 177–276, and 352–377; these read DLSD…YESN, TPLG…RMRE, and MGPE…KPSS. A compositionally biased stretch (acidic residues) spans 69–82; the sequence is FYEDDDENFSDSSE. The span at 85 to 96 shows a compositional bias: basic and acidic residues; sequence SPTREPVDRYGN. Polar residues-rich tracts occupy residues 211-233 and 241-251; these read SAQS…SMSI and ASQGMPNNQGQ. Positions 265–276 are enriched in basic and acidic residues; that stretch reads PLDDTPPRRMRE.

Belongs to the MDM12 family. In terms of assembly, component of the ER-mitochondria encounter structure (ERMES) or MDM complex, composed of MMM1, MDM10, MDM12 and MDM34. An MMM1 homodimer associates with one molecule of MDM12 on each side in a pairwise head-to-tail manner, and the SMP-LTD domains of MMM1 and MDM12 generate a continuous hydrophobic tunnel for phospholipid trafficking.

It is found in the mitochondrion outer membrane. The protein localises to the endoplasmic reticulum membrane. In terms of biological role, component of the ERMES/MDM complex, which serves as a molecular tether to connect the endoplasmic reticulum (ER) and mitochondria. Components of this complex are involved in the control of mitochondrial shape and protein biogenesis, and function in nonvesicular lipid trafficking between the ER and mitochondria. MDM12 is required for the interaction of the ER-resident membrane protein MMM1 and the outer mitochondrial membrane-resident beta-barrel protein MDM10. The MDM12-MMM1 subcomplex functions in the major beta-barrel assembly pathway that is responsible for biogenesis of all mitochondrial outer membrane beta-barrel proteins, and acts in a late step after the SAM complex. The MDM10-MDM12-MMM1 subcomplex further acts in the TOM40-specific pathway after the action of the MDM12-MMM1 complex. Essential for establishing and maintaining the structure of mitochondria and maintenance of mtDNA nucleoids. The sequence is that of Mitochondrial distribution and morphology protein 12 from Ajellomyces capsulatus (strain G186AR / H82 / ATCC MYA-2454 / RMSCC 2432) (Darling's disease fungus).